We begin with the raw amino-acid sequence, 368 residues long: MSLFGTTSGFGSGGTSMFGSTTTDNHNPMKDIEVTSSPDDSIGCLSFSPPTLPGNFLIAGSWANDVRCWEVQDSGQTIPKAQQMHTGPVLDVCWSDDGSKVFTASCDKTAKMWDLNSNQAIQIAQHDAPVKTVHWIKAPNYSCVMTGSWDKTLKFWDTRSSNPMMVLQLPERCYCADVIYPMAVVATAERGLIVYQLENQPSEFRRIESPLKHQHRCVAIFKDKQNKPTGFALGSIEGRVAIHYINPPNPAKDNFTFKCHRSNGTNTSAPQDIYAVNGIAFHPVHGTLATVGSDGRFSFWDKDARTKLKTSEQLDQPISACCFNHNGNIFAYASSYDWSKGHEFYNPQKKNYIFLRNAAEELKPRNKK.

Positions 15–34 are disordered; it reads TSMFGSTTTDNHNPMKDIEV. WD repeat units follow at residues 37 to 79, 84 to 114, 125 to 157, 168 to 206, 215 to 255, 271 to 301, and 310 to 346; these read SPDD…QTIP, MHTG…KMWD, QHDA…KFWD, QLPE…EFRR, HRCV…KDNF, QDIY…SFWD, and TSEQ…EFYN. Threonine 229 is modified (phosphothreonine).

This sequence belongs to the WD repeat rae1 family. As to quaternary structure, interacts with NUMA1 (via N-terminal end of the coiled-coil domain); this interaction promotes spindle formation in mitosis. Interacts with NUP98. Interacts with MYCBP2. Interacts with USP11.

Its subcellular location is the cytoplasm. It localises to the nucleus. The protein localises to the cytoskeleton. The protein resides in the spindle pole. Plays a role in mitotic bipolar spindle formation. Binds mRNA. May function in nucleocytoplasmic transport and in directly or indirectly attaching cytoplasmic mRNPs to the cytoskeleton. This chain is mRNA export factor (RAE1), found in Bos taurus (Bovine).